Reading from the N-terminus, the 67-residue chain is Small ribosomal subunit protein eS31 (67 aa).

Residues C31, C34, C49, and C52 each coordinate Zn(2+). The C4-type zinc-finger motif lies at 31-52 (CPKCGAGVFMAEHLNRFACGKC).

Belongs to the eukaryotic ribosomal protein eS31 family. Part of the 30S ribosomal subunit. Zn(2+) serves as cofactor.

In Methanococcus maripaludis (strain C6 / ATCC BAA-1332), this protein is Small ribosomal subunit protein eS31.